Here is a 1244-residue protein sequence, read N- to C-terminus: Alpha-protein kinase 1 (1244 aa).

Residues Phe-61, Gln-67, Arg-116, 150–153 (RQAR), Asp-231, Lys-233, 236–237 (ST), and Phe-295 each bind ADP-D-glycero-beta-D-manno-heptose. 4 disordered regions span residues 650–675 (LQEPNNDNLEPSQNQPQQQMPLTPFS), 701–737 (VRNMGPRNTSAHSRPSYRSASWSSDSGRPKNMGTHPS), 757–798 (VKDR…TEDA), and 824–848 (NWPVQNPDSRKSGGPVAEQGIDPDA). The segment covering 652–675 (EPNNDNLEPSQNQPQQQMPLTPFS) has biased composition (polar residues). The span at 713–726 (SRPSYRSASWSSDS) shows a compositional bias: low complexity. The segment covering 757–771 (VKDRQGKEQGEEISE) has biased composition (basic and acidic residues). Acidic residues predominate over residues 787-798 (PEGETAESTEDA). Residues 1017–1237 (KYSKKSELWT…ICHRLSLTRP (221 aa)) enclose the Alpha-type protein kinase domain.

It belongs to the protein kinase superfamily. Alpha-type protein kinase family. ALPK subfamily. Highly expressed in liver. Expressed in the optic nerve and retinal pigmented epithelium. Lower expression is observed in the macula and extramacular retina.

It localises to the cytoplasm. Its subcellular location is the cytosol. The protein resides in the cytoskeleton. The protein localises to the spindle pole. It is found in the microtubule organizing center. It localises to the centrosome. Its subcellular location is the cell projection. The protein resides in the cilium. It catalyses the reaction L-seryl-[protein] + ATP = O-phospho-L-seryl-[protein] + ADP + H(+). The catalysed reaction is L-threonyl-[protein] + ATP = O-phospho-L-threonyl-[protein] + ADP + H(+). Serine/threonine-protein kinase activity is stimulated upon ADP-D-glycero-beta-D-manno-heptose (ADP-Heptose)-binding. Functionally, serine/threonine-protein kinase that detects bacterial pathogen-associated molecular pattern metabolites (PAMPs) and initiates an innate immune response, a critical step for pathogen elimination and engagement of adaptive immunity. Specifically recognizes and binds ADP-D-glycero-beta-D-manno-heptose (ADP-Heptose), a potent PAMP present in all Gram-negative and some Gram-positive bacteria. ADP-Heptose-binding stimulates its kinase activity to phosphorylate and activate TIFA, triggering pro-inflammatory NF-kappa-B signaling. May be involved in monosodium urate monohydrate (MSU)-induced inflammation by mediating phosphorylation of unconventional myosin MYO9A. May also play a role in apical protein transport by mediating phosphorylation of unconventional myosin MYO1A. May play a role in ciliogenesis. This Homo sapiens (Human) protein is Alpha-protein kinase 1.